Reading from the N-terminus, the 258-residue chain is Deoxyribose-phosphate aldolase (258 aa).

Residue Asp102 is the Proton donor/acceptor of the active site. Lys165 (schiff-base intermediate with acetaldehyde) is an active-site residue. Lys199 acts as the Proton donor/acceptor in catalysis.

This sequence belongs to the DeoC/FbaB aldolase family. DeoC type 2 subfamily.

It is found in the cytoplasm. It carries out the reaction 2-deoxy-D-ribose 5-phosphate = D-glyceraldehyde 3-phosphate + acetaldehyde. The protein operates within carbohydrate degradation; 2-deoxy-D-ribose 1-phosphate degradation; D-glyceraldehyde 3-phosphate and acetaldehyde from 2-deoxy-alpha-D-ribose 1-phosphate: step 2/2. Catalyzes a reversible aldol reaction between acetaldehyde and D-glyceraldehyde 3-phosphate to generate 2-deoxy-D-ribose 5-phosphate. This is Deoxyribose-phosphate aldolase from Aliivibrio salmonicida (strain LFI1238) (Vibrio salmonicida (strain LFI1238)).